The sequence spans 2639 residues: BAH and coiled-coil domain-containing protein 1 (2639 aa).

12 disordered regions span residues 23–49, 84–107, 188–249, 669–702, 716–746, 939–1047, 1104–1331, 1457–1513, 1582–1666, 1722–1776, 1868–1893, and 2057–2119; these read SAAAAARLAPAGPAAQPPAHFQPGKYF, SAASTHPSGPSSSPPEQAYRGSHP, APAH…GKER, FLSSKGPGQSERPDCARSREHDTTHGDGEVRQPP, VSRSEAAYGTNTARQGRAAPAFKGGGGPRST, QRAA…QSTA, SDVH…HSSG, QREL…KKVK, KVKS…LGTE, EVKI…RDAL, FDDNSSFSEEEEDEEEEEEDSGPLSA, and KKVS…DHFL. Low complexity-rich tracts occupy residues 24–41 and 84–98; these read AAAAARLAPAGPAAQPPA and SAASTHPSGPSSSPP. 2 stretches are compositionally biased toward basic and acidic residues: residues 211–247 and 679–698; these read GPKDFDRFLVGKELGREKAGKAAEGKERPAAEEDGGK and ERPDCARSREHDTTHGDGEV. Lysine 222 carries the N6-acetyllysine modification. Over residues 946–964 the composition is skewed to basic and acidic residues; the sequence is RKPEDQHLDLEEPAQEKAP. Over residues 972–988 the composition is skewed to low complexity; that stretch reads ALTPTAPGAPSPAAGPT. Residues 989 to 1013 show a composition bias toward pro residues; that stretch reads KLPPCCHPPDPKPPASSPTPPPRPS. Positions 1106–1122 are enriched in polar residues; that stretch reads VHSSNLEDPETMQTTAP. The segment covering 1182–1198 has biased composition (low complexity); it reads LEGLQELQCAALLEAGG. A compositionally biased stretch (basic and acidic residues) spans 1212–1221; that stretch reads AREERSREEG. Residues 1244-1275 show a composition bias toward acidic residues; it reads LEDEGEQPAPEEDELEEDELGQQSMEDSEEDC. Residues 1307-1324 show a composition bias toward pro residues; the sequence is DSPPDPQPPAASGPPSTV. Positions 1439–1473 form a coiled coil; it reads EVGMRVRLAELQRRYKEKQRELARLQRKHDHERDE. The span at 1457 to 1475 shows a compositional bias: basic and acidic residues; the sequence is QRELARLQRKHDHERDESS. Residues 1478 to 1492 are compositionally biased toward basic residues; sequence PARRGPGRPRKRKHS. Positions 1751-1761 are enriched in basic residues; that stretch reads GKKKAKGKAKG. Over residues 1868–1888 the composition is skewed to acidic residues; that stretch reads FDDNSSFSEEEEDEEEEEEDS. Position 2274 is a phosphoserine (serine 2274). 3 disordered regions span residues 2317 to 2336, 2348 to 2383, and 2432 to 2472; these read SDCHSSFSDEDEDGPGLAAG, SSSSSGSSTSSSSGSVSTSSLCSSDNEDSSYSSDDE, and GAGS…ENRP. Residues 2348-2371 are compositionally biased toward low complexity; it reads SSSSSGSSTSSSSGSVSTSSLCSS. Residues 2372 to 2383 show a composition bias toward acidic residues; that stretch reads DNEDSSYSSDDE. Over residues 2432–2442 the composition is skewed to low complexity; that stretch reads GAGSGPSSSSK. A BAH domain is found at 2513-2633; that stretch reads ETLRVGDCAV…PTTGRLVTAD (121 aa).

This Homo sapiens (Human) protein is BAH and coiled-coil domain-containing protein 1.